A 370-amino-acid polypeptide reads, in one-letter code: Chorismate synthase (370 aa).

An NADP(+)-binding site is contributed by arginine 48. FMN-binding positions include 125 to 127 (RSS), 241 to 242 (NA), glycine 286, 301 to 305 (KPTSS), and arginine 327.

It belongs to the chorismate synthase family. In terms of assembly, homotetramer. It depends on FMNH2 as a cofactor.

The catalysed reaction is 5-O-(1-carboxyvinyl)-3-phosphoshikimate = chorismate + phosphate. Its pathway is metabolic intermediate biosynthesis; chorismate biosynthesis; chorismate from D-erythrose 4-phosphate and phosphoenolpyruvate: step 7/7. Catalyzes the anti-1,4-elimination of the C-3 phosphate and the C-6 proR hydrogen from 5-enolpyruvylshikimate-3-phosphate (EPSP) to yield chorismate, which is the branch point compound that serves as the starting substrate for the three terminal pathways of aromatic amino acid biosynthesis. This reaction introduces a second double bond into the aromatic ring system. This chain is Chorismate synthase, found in Ruegeria sp. (strain TM1040) (Silicibacter sp.).